Consider the following 232-residue polypeptide: Octanoyltransferase (232 aa).

Residues 44 to 219 enclose the BPL/LPL catalytic domain; the sequence is EYTADEIWVV…QLARQFGLVL (176 aa). Residues 83–90, 150–152, and 163–165 each bind substrate; these read RGGQVTYH, ALG, and GLS. The active-site Acyl-thioester intermediate is Cys-181.

Belongs to the LipB family.

Its subcellular location is the cytoplasm. The enzyme catalyses octanoyl-[ACP] + L-lysyl-[protein] = N(6)-octanoyl-L-lysyl-[protein] + holo-[ACP] + H(+). The protein operates within protein modification; protein lipoylation via endogenous pathway; protein N(6)-(lipoyl)lysine from octanoyl-[acyl-carrier-protein]: step 1/2. Catalyzes the transfer of endogenously produced octanoic acid from octanoyl-acyl-carrier-protein onto the lipoyl domains of lipoate-dependent enzymes. Lipoyl-ACP can also act as a substrate although octanoyl-ACP is likely to be the physiological substrate. This is Octanoyltransferase from Xanthomonas axonopodis pv. citri (strain 306).